Here is a 300-residue protein sequence, read N- to C-terminus: Acetyl-coenzyme A carboxylase carboxyl transferase subunit beta 1 (300 aa).

Positions 26–294 (MWVKCPSCGD…HTSAAQHVPA (269 aa)) constitute a CoA carboxyltransferase N-terminal domain. Zn(2+)-binding residues include C30, C33, C49, and C51. The segment at 30 to 51 (CPSCGDLIYTRQFSDNLKVCKC) adopts a C4-type zinc-finger fold.

Belongs to the AccD/PCCB family. In terms of assembly, acetyl-CoA carboxylase is a heterohexamer composed of biotin carboxyl carrier protein (AccB), biotin carboxylase (AccC) and two subunits each of ACCase subunit alpha (AccA) and ACCase subunit beta (AccD). Zn(2+) serves as cofactor.

The protein localises to the cytoplasm. It catalyses the reaction N(6)-carboxybiotinyl-L-lysyl-[protein] + acetyl-CoA = N(6)-biotinyl-L-lysyl-[protein] + malonyl-CoA. It functions in the pathway lipid metabolism; malonyl-CoA biosynthesis; malonyl-CoA from acetyl-CoA: step 1/1. In terms of biological role, component of the acetyl coenzyme A carboxylase (ACC) complex. Biotin carboxylase (BC) catalyzes the carboxylation of biotin on its carrier protein (BCCP) and then the CO(2) group is transferred by the transcarboxylase to acetyl-CoA to form malonyl-CoA. This is Acetyl-coenzyme A carboxylase carboxyl transferase subunit beta 1 from Roseiflexus sp. (strain RS-1).